Reading from the N-terminus, the 283-residue chain is Elongation factor Ts (283 aa).

The segment at 80-83 (TDFV) is involved in Mg(2+) ion dislocation from EF-Tu.

This sequence belongs to the EF-Ts family.

Its subcellular location is the cytoplasm. Associates with the EF-Tu.GDP complex and induces the exchange of GDP to GTP. It remains bound to the aminoacyl-tRNA.EF-Tu.GTP complex up to the GTP hydrolysis stage on the ribosome. The protein is Elongation factor Ts of Shigella boydii serotype 18 (strain CDC 3083-94 / BS512).